The primary structure comprises 598 residues: NADH-quinone oxidoreductase subunit C/D (598 aa).

The interval 1–189 is NADH dehydrogenase I subunit C; that stretch reads MTDLTTSDST…DPFVLTKQKE (189 aa). The tract at residues 213–598 is NADH dehydrogenase I subunit D; sequence DFMFLNLGPN…IDFVMSDVDR (386 aa).

It in the N-terminal section; belongs to the complex I 30 kDa subunit family. This sequence in the C-terminal section; belongs to the complex I 49 kDa subunit family. In terms of assembly, NDH-1 is composed of 13 different subunits. Subunits NuoB, CD, E, F, and G constitute the peripheral sector of the complex.

Its subcellular location is the cell inner membrane. The enzyme catalyses a quinone + NADH + 5 H(+)(in) = a quinol + NAD(+) + 4 H(+)(out). In terms of biological role, NDH-1 shuttles electrons from NADH, via FMN and iron-sulfur (Fe-S) centers, to quinones in the respiratory chain. The immediate electron acceptor for the enzyme in this species is believed to be ubiquinone. Couples the redox reaction to proton translocation (for every two electrons transferred, four hydrogen ions are translocated across the cytoplasmic membrane), and thus conserves the redox energy in a proton gradient. This chain is NADH-quinone oxidoreductase subunit C/D, found in Yersinia enterocolitica serotype O:8 / biotype 1B (strain NCTC 13174 / 8081).